Consider the following 846-residue polypeptide: Translation initiation factor IF-2 (846 aa).

Positions 94–263 are disordered; the sequence is QRSPEEIQAE…HGFQNPTGPV (170 aa). Basic and acidic residues predominate over residues 96-135; that stretch reads SPEEIQAEQKRELDERRAAENAARDKVEAEVRQRNEEQAR. 2 stretches are compositionally biased toward low complexity: residues 136 to 148 and 158 to 176; these read RQAA…APAP and AAPV…ASED. 2 stretches are compositionally biased toward basic and acidic residues: residues 177-206 and 230-239; these read AAAR…RGEA and TTDEESDGAR. Positions 240–253 are enriched in basic residues; that stretch reads RGRGGKSKLKKRNQ. The region spanning 346–513 is the tr-type G domain; sequence SRAPVVTVMG…AVLLQAEILE (168 aa). Positions 355–362 are G1; it reads GHVDHGKT. 355 to 362 is a binding site for GTP; that stretch reads GHVDHGKT. The segment at 380-384 is G2; it reads GITQH. The G3 stretch occupies residues 401–404; sequence DTPG. GTP contacts are provided by residues 401-405 and 455-458; these read DTPGH and NKID. Positions 455–458 are G4; it reads NKID. The segment at 491–493 is G5; the sequence is SAK.

It belongs to the TRAFAC class translation factor GTPase superfamily. Classic translation factor GTPase family. IF-2 subfamily.

It is found in the cytoplasm. Its function is as follows. One of the essential components for the initiation of protein synthesis. Protects formylmethionyl-tRNA from spontaneous hydrolysis and promotes its binding to the 30S ribosomal subunits. Also involved in the hydrolysis of GTP during the formation of the 70S ribosomal complex. The polypeptide is Translation initiation factor IF-2 (Pseudomonas putida (strain ATCC 47054 / DSM 6125 / CFBP 8728 / NCIMB 11950 / KT2440)).